The primary structure comprises 1217 residues: ATP-dependent helicase/nuclease subunit A (1217 aa).

Residues 10-475 (VIWTDAQWQS…IDLSQNFRSR (466 aa)) enclose the UvrD-like helicase ATP-binding domain. 31–38 (AAAGSGKT) contacts ATP. The 311-residue stretch at 476–786 (KEVLSTTNYI…RMMTIHSSKG (311 aa)) folds into the UvrD-like helicase C-terminal domain.

Belongs to the helicase family. AddA subfamily. In terms of assembly, heterodimer of AddA and AddB/RexB. Requires Mg(2+) as cofactor.

It catalyses the reaction Couples ATP hydrolysis with the unwinding of duplex DNA by translocating in the 3'-5' direction.. It carries out the reaction ATP + H2O = ADP + phosphate + H(+). The heterodimer acts as both an ATP-dependent DNA helicase and an ATP-dependent, dual-direction single-stranded exonuclease. Recognizes the chi site generating a DNA molecule suitable for the initiation of homologous recombination. The AddA nuclease domain is required for chi fragment generation; this subunit has the helicase and 3' -&gt; 5' nuclease activities. This Staphylococcus aureus (strain USA300) protein is ATP-dependent helicase/nuclease subunit A.